A 1062-amino-acid polypeptide reads, in one-letter code: Histone H3-lysine(4) N-trimethyltransferase ATX1 (1062 aa).

The disordered stretch occupies residues N159 to T184. The PWWP domain maps to P301 to G365. The disordered stretch occupies residues Q401 to G424. Positions D441 to D500 constitute an FYR N-terminal domain. Residues K504–K586 form the FYR C-terminal domain. The Phorbol-ester/DAG-type zinc finger occupies R591–C647. The segment at Y599–E1062 is interaction with PIP5. The PHD-type 1 zinc-finger motif lies at L609–G660. Residues P665–T698 form a C2HC pre-PHD-type zinc finger. A PHD-type 2 zinc finger spans residues L722 to R785. The SET domain maps to K898–R1016. H908 lines the S-adenosyl-L-methionine pocket. O-linked (GlcNAc) serine glycosylation occurs at S947. Residues Y954 and N977–H978 each bind S-adenosyl-L-methionine. Zn(2+)-binding residues include C980, C1026, C1028, and C1033. The 17-residue stretch at E1022–N1038 folds into the Post-SET domain.

It belongs to the class V-like SAM-binding methyltransferase superfamily. Histone-lysine methyltransferase family. TRX/MLL subfamily. As to quaternary structure, interacts with PIP5. Interacts with WDR5A. Binds to CLF in the nucleus. Interacts with NRPB1 CTD domain, especially when NRPB1 is phosphorylated on 'Ser-5' of the heptapeptide repeat. Component of a nuclear protein complex containing at least TATA binding proteins (TBPs, e.g. TBP1 and TBP2) and ATX1. Associates with ULT1 for trimethylating 'Lys-4' on histone H3 (H3K4me3) at flower MADS box gene loci. Interacts with SEC. Interacts with A4/EF1A in the cytoplasm on the nuclear periphery. In terms of processing, activated via O-glycosylation by SEC; this modification triggers FLC locus H3K4me3 histone modification, thus preventing premature flowering. Strongly expressed in cotyledons, but weak levels in the first true leaves, except at the hydothodes. Ubiquitous with higher levels in dividing tissues, including inflorescence meristem and flower primordia. Expressed also in leaves (especially at hydathodes), in growing inflorescence stems and in the mature flowers. In terms of tissue distribution, strongly expressed in young seedlings.

The protein localises to the nucleus. It is found in the cytoplasm. It localises to the perinuclear region. The enzyme catalyses L-lysyl(4)-[histone H3] + 3 S-adenosyl-L-methionine = N(6),N(6),N(6)-trimethyl-L-lysyl(4)-[histone H3] + 3 S-adenosyl-L-homocysteine + 3 H(+). It carries out the reaction L-lysyl-[protein] + 3 S-adenosyl-L-methionine = N(6),N(6),N(6)-trimethyl-L-lysyl-[protein] + 3 S-adenosyl-L-homocysteine + 3 H(+). Its function is as follows. Binds to the promoter and regulates the transcription of target genes, maintaining them in an active state; at promoters, required for TATA binding proteins (TBPs, e.g. TBP1 and TBP2) and RNA polymerase II (Pol II) recruitment, and, in a subsequent event, is recruited by a phosphorylated form of Pol II to the +300-bp region of transcribed sequences to trimethylates nucleosomes. Histone trimethyltransferase that trimethylates 'Lys-4' of histone H3 (H3K4me3); H3 'Lys-4' methylation represents a specific tag for epigenetic transcriptional activation and is required for efficient elongation of transcription but not for transcription initiation. Methylates only a limited fraction of nucleosomes of target genes (e.g. FLC, NAP, XTH33 and WRKY70). Necessary for WDR5A occupancy at WRKY70 and LTP7 genes. Required to maintain the active state of class A (AP1 and AP2), class B (PI and AP3) and class C (AG, AGAMOUS) floral homeotic genes at early stages of flower development. Together with CLF, modulates AG nucleosome methylation statement. Involved in epigenetic regulation (e.g. H3K4me3) of the floral repressors FLC, FT and SOC1 to prevent the transition from vegetative to reproductive development, independently of the photoperiod; binds the active FLC locus before flowering, but this interaction is released upon the transition to flowering. Regulates floral organ identity and flowering transition. Functions as a receptor for the lipid messenger phosphatidylinositol 5-phosphate (PI5P), which negatively regulates its transcriptional activation activity. Exhibits histone methylase activity and subsequent transcriptional regulation on WRKY70 gene, and, to a lower extent on secondary defense-response targets salicylic acid (SA)-responsive gene PR1 and jasmonic acid (JA)-responsive gene THI2.1. Involved in response to dehydration stress-response in both abscisic acid (ABA)-dependent and ABA-independent pathways; this includes specific genes (e.g. COR15A, ADH1, CBF4, RD29A, RD29B, RD26, ABF3, NCED3 and ABA3) epigenetic regulation (e.g. H3K4me3 and Pol II recruitment) to promote their transcription and influence ABA production. Implicated in stomatal closure regulation. Indirect repressor of XTH genes (XTH33). Necessary for the phosphorylation of Pol II NRPB1 (e.g. Ser5P and Ser2P) at the promoters of target genes, thus regulating both early and late stages of transcription. Controls root growth and architecture by regulating the timing of root development, stem cell niche maintenance (e.g. quiescent center (QC)), and cell patterning during primary and lateral root development. Modulates cell cycle duration, cell production, and the transition from cell proliferation in the root apical meristem (RAM) to cell elongation. Functionally, trimethylates A4/EF1A post-translationally at Lys-396. Required for actin cytoskeleton organization. This Arabidopsis thaliana (Mouse-ear cress) protein is Histone H3-lysine(4) N-trimethyltransferase ATX1.